Here is a 476-residue protein sequence, read N- to C-terminus: Proline--tRNA ligase 2 (476 aa).

This sequence belongs to the class-II aminoacyl-tRNA synthetase family. ProS type 3 subfamily. Homodimer.

The protein localises to the cytoplasm. It catalyses the reaction tRNA(Pro) + L-proline + ATP = L-prolyl-tRNA(Pro) + AMP + diphosphate. Catalyzes the attachment of proline to tRNA(Pro) in a two-step reaction: proline is first activated by ATP to form Pro-AMP and then transferred to the acceptor end of tRNA(Pro). The polypeptide is Proline--tRNA ligase 2 (Bacillus thuringiensis (strain Al Hakam)).